The primary structure comprises 467 residues: UTP--glucose-1-phosphate uridylyltransferase (467 aa).

UTP is bound by residues 83–86 (LNGG), Lys-97, Gln-160, and Gly-189. Substrate is bound at residue 85–86 (GG). Residues His-190 and 218–220 (NSD) each bind substrate. 2 residues coordinate UTP: Asp-220 and Lys-358.

The protein belongs to the UDPGP type 1 family.

Its subcellular location is the cytoplasm. The catalysed reaction is alpha-D-glucose 1-phosphate + UTP + H(+) = UDP-alpha-D-glucose + diphosphate. Plays a central role as a glucosyl donor in cellular metabolic pathways. This is UTP--glucose-1-phosphate uridylyltransferase (UGPA) from Musa acuminata (Banana).